A 375-amino-acid polypeptide reads, in one-letter code: 23S rRNA (uracil(747)-C(5))-methyltransferase RlmC (375 aa).

4 residues coordinate [4Fe-4S] cluster: Cys-3, Cys-11, Cys-14, and Cys-87. S-adenosyl-L-methionine-binding residues include Gln-212, Phe-241, Glu-262, and Asn-307. The active-site Nucleophile is the Cys-334.

Belongs to the class I-like SAM-binding methyltransferase superfamily. RNA M5U methyltransferase family. RlmC subfamily.

It carries out the reaction uridine(747) in 23S rRNA + S-adenosyl-L-methionine = 5-methyluridine(747) in 23S rRNA + S-adenosyl-L-homocysteine + H(+). In terms of biological role, catalyzes the formation of 5-methyl-uridine at position 747 (m5U747) in 23S rRNA. In Salmonella paratyphi A (strain ATCC 9150 / SARB42), this protein is 23S rRNA (uracil(747)-C(5))-methyltransferase RlmC.